Reading from the N-terminus, the 86-residue chain is Toxin Td2 (86 aa).

The N-terminal stretch at 1–20 (MTRFVLFLNCFFLICMVVEC) is a signal peptide. Positions 21–83 (KEGYLMGADG…TWDRATNTCG (63 aa)) constitute an LCN-type CS-alpha/beta domain. Disulfide bonds link cysteine 31-cysteine 82, cysteine 35-cysteine 57, cysteine 43-cysteine 63, and cysteine 47-cysteine 65. Arginine 84 carries the post-translational modification Arginine amide.

Expressed by the venom gland.

The protein localises to the secreted. In terms of biological role, beta toxins bind voltage-independently at site-4 of sodium channels (Nav) and shift the voltage of activation toward more negative potentials thereby affecting sodium channel activation and promoting spontaneous and repetitive firing. The protein is Toxin Td2 of Tityus discrepans (Venezuelan scorpion).